A 430-amino-acid chain; its full sequence is PCI domain-containing protein 2 homolog (430 aa).

Positions 243–424 (ITYRFFNGRL…ALVVSPTNPF (182 aa)) constitute a PCI domain.

Belongs to the CSN12 family.

The polypeptide is PCI domain-containing protein 2 homolog (pcid2) (Dictyostelium discoideum (Social amoeba)).